The sequence spans 738 residues: Polyribonucleotide nucleotidyltransferase (738 aa).

Mg(2+) is bound by residues Asp-528 and Asp-534. The region spanning 594 to 653 is the KH domain; it reads PRVVRVKIPVQKIGELIGPKGKVINSIQDETGAEISIEDDGTVYIGSSQADSSEKAVAMV. An S1 motif domain is found at 665-737; it reads GSQFLGTVVK…DRGKLCLVAV (73 aa).

The protein belongs to the polyribonucleotide nucleotidyltransferase family. It depends on Mg(2+) as a cofactor.

It is found in the cytoplasm. The enzyme catalyses RNA(n+1) + phosphate = RNA(n) + a ribonucleoside 5'-diphosphate. Its function is as follows. Involved in mRNA degradation. Catalyzes the phosphorolysis of single-stranded polyribonucleotides processively in the 3'- to 5'-direction. In Tropheryma whipplei (strain Twist) (Whipple's bacillus), this protein is Polyribonucleotide nucleotidyltransferase.